We begin with the raw amino-acid sequence, 433 residues long: MTATWEKKEGNEGVLTVTVPAEKVNKALDQAFKKVVKQINVPGFRKGKVPRPIFEQRFGVEALYQDAVDILLPEAYGEAIEETEINPVAQPEVNVTQIEKGKDFIFEATVTVEPEVKLGDYKGLEIEKQETDLSDEELQESIDHSLSHLAEMVVKEDGAVENGDTVNIDFSGSVDGEEFDGGQAEGYDLEIGSGSFIPGFEEQIEGMKTGDEKDVVVTFPEEYHAEELAGKEATFKTKVNEIKFKDVPELNDEIANELDSDAENVDEYKENLRKRLSEQKATEAENTEKEEAINKATENASIDIPEAMINTELDRMIQEFGQRIQQQGLDLQTYYQISGQNEEQLRDQMKDDAEQRVKTNLTLTAIADEENIEVSDEDIDKELEKMSEQFNISVEDIKSTLGNTDIVKNDVRIQKVIDLLRDNAKYVEATKED.

One can recognise a PPIase FKBP-type domain in the interval 163–248 (GDTVNIDFSG…VNEIKFKDVP (86 aa)).

It belongs to the FKBP-type PPIase family. Tig subfamily.

It localises to the cytoplasm. It carries out the reaction [protein]-peptidylproline (omega=180) = [protein]-peptidylproline (omega=0). In terms of biological role, involved in protein export. Acts as a chaperone by maintaining the newly synthesized protein in an open conformation. Functions as a peptidyl-prolyl cis-trans isomerase. In Staphylococcus epidermidis (strain ATCC 35984 / DSM 28319 / BCRC 17069 / CCUG 31568 / BM 3577 / RP62A), this protein is Trigger factor.